Reading from the N-terminus, the 123-residue chain is Double-stranded DNA deaminase immunity protein (123 aa).

The toxic domain forms a 1:1 complex with the DddI immunity protein. This protein blocks the active site of the toxin.

Functionally, immunity protein component of a toxin-immunity protein module, which functions as a cellular contact-dependent growth inhibition (CDI) system. CDI modules allow bacteria to communicate with and inhibit the growth of closely related neighboring bacteria in a contact-dependent fashion. Bacteria that have this module inhibit or kill bacteria without it, giving them a growth advantage. Specifically inhibits the toxic activity of cognate toxin DddA (C-terminal 163 residue fragment) upon expression in E.coli. This chain is Double-stranded DNA deaminase immunity protein, found in Burkholderia cenocepacia (strain H111).